The chain runs to 353 residues: Methylthioribose-1-phosphate isomerase (353 aa).

Substrate is bound by residues 51-53 (RGA), R94, and Q199. D240 serves as the catalytic Proton donor. Position 250–251 (250–251 (NK)) interacts with substrate.

This sequence belongs to the eIF-2B alpha/beta/delta subunits family. MtnA subfamily. In terms of assembly, homodimer.

The enzyme catalyses 5-(methylsulfanyl)-alpha-D-ribose 1-phosphate = 5-(methylsulfanyl)-D-ribulose 1-phosphate. Its pathway is amino-acid biosynthesis; L-methionine biosynthesis via salvage pathway; L-methionine from S-methyl-5-thio-alpha-D-ribose 1-phosphate: step 1/6. Its function is as follows. Catalyzes the interconversion of methylthioribose-1-phosphate (MTR-1-P) into methylthioribulose-1-phosphate (MTRu-1-P). The chain is Methylthioribose-1-phosphate isomerase from Bacillus velezensis (strain DSM 23117 / BGSC 10A6 / LMG 26770 / FZB42) (Bacillus amyloliquefaciens subsp. plantarum).